A 1516-amino-acid chain; its full sequence is Mediator of RNA polymerase II transcription subunit 14 (1516 aa).

Disordered regions lie at residues 22-98 (LSSQ…EVPA) and 1434-1516 (MHRQ…YPPQ). Residues 34–47 (SPAAPISPAPSGSA) are compositionally biased toward low complexity. The span at 72–83 (SEVDVKSIHSSD) shows a compositional bias: basic and acidic residues. Over residues 1463-1473 (SHQQHMMNPGS) the composition is skewed to low complexity. Residues 1474-1483 (VGPGSVGGPG) show a composition bias toward gly residues. Over residues 1502–1516 (QSYHHPLHHQQYPPQ) the composition is skewed to low complexity.

This sequence belongs to the Mediator complex subunit 14 family. Component of the Mediator complex.

It localises to the nucleus. Its function is as follows. Component of the Mediator complex, a coactivator involved in the regulated transcription of nearly all RNA polymerase II-dependent genes. Mediator functions as a bridge to convey information from gene-specific regulatory proteins to the basal RNA polymerase II transcription machinery. Mediator is recruited to promoters by direct interactions with regulatory proteins and serves as a scaffold for the assembly of a functional preinitiation complex with RNA polymerase II and the general transcription factors. Required for transcription in the embryo and for phosphorylation of the RNA polymerase II C-terminal domain repeat. The chain is Mediator of RNA polymerase II transcription subunit 14 (rgr-1) from Caenorhabditis elegans.